We begin with the raw amino-acid sequence, 878 residues long: Aminopeptidase M1-A (878 aa).

Positions 105–212 are required for membrane association; sequence VGEGTLVIAF…MSTYLVAVIV (108 aa). Residues glutamate 145 and 278–282 each bind substrate; that span reads GAMEN. Histidine 314 is a binding site for Zn(2+). Glutamate 315 acts as the Proton acceptor in catalysis. Zn(2+) contacts are provided by histidine 318 and glutamate 337. A Dileucine internalization motif motif is present at residues 727-728; the sequence is LL.

Belongs to the peptidase M1 family. As to quaternary structure, homodimer. Zn(2+) is required as a cofactor.

The protein resides in the membrane. It is found in the microsome membrane. Its subcellular location is the cytoplasm. The enzyme catalyses Release of an N-terminal amino acid, Xaa-|-Yaa- from a peptide, amide or arylamide. Xaa is preferably Ala, but may be most amino acids including Pro (slow action). When a terminal hydrophobic residue is followed by a prolyl residue, the two may be released as an intact Xaa-Pro dipeptide.. The chain is Aminopeptidase M1-A from Oryza sativa subsp. japonica (Rice).